Here is a 241-residue protein sequence, read N- to C-terminus: Small ribosomal subunit protein uS3 (241 aa).

The KH type-2 domain occupies 39 to 107; sequence IREVLMKNLK…EVVINIVEVR (69 aa). The tract at residues 219–241 is disordered; sequence MAELDHAGGGGGGERRRRERDAA. The span at 231–241 shows a compositional bias: basic and acidic residues; sequence GERRRRERDAA.

The protein belongs to the universal ribosomal protein uS3 family. As to quaternary structure, part of the 30S ribosomal subunit. Forms a tight complex with proteins S10 and S14.

Binds the lower part of the 30S subunit head. Binds mRNA in the 70S ribosome, positioning it for translation. The chain is Small ribosomal subunit protein uS3 from Beijerinckia indica subsp. indica (strain ATCC 9039 / DSM 1715 / NCIMB 8712).